A 596-amino-acid polypeptide reads, in one-letter code: MFTNIHSIARNSSCENELEELMHQIDIMVSHRKVEWEKHVKVLEQKLEAQDRELTEARNLVDEKNHEIGILCKKLEGVDTAQHEMAQNYERQLQALKFQLCKLKKSYEKLHFHQEKHQKNENAAQERSRCELQWLTQKIEEFKARSREWEKQRVFYQDQLKSLDEQRKTLAEKCQLFQKESLSYQEQLSSQKQLQSEAITNNQSEMRRLRCLLDTSQETIRSDGVIIENLKSTVKEITLSRDSLKDENQQLLQELRRCQKQSQNMEAQLYKAKLELQSCNDLLRVPALEERQAQKETANLANQKTAQGEEASFQVTDPRMNYMTSEPEHKSFNLSKSEKYQAENDLHGTEAKNSDLERLRKDIGDLTAKLNQKDVTIATVSRKVSRLERELELKGAQNRQTSMPLSQKDVIAELESEMPQIHAVNKAPQTDSGEVDPWISIKCGEHDKPQKHRSFHGENNSLKPTNYADTRNHSVGSEWESEKSLCPWNTPTLGSATDDDCDLVDNENEWLSLYNSTLYPGLDLPPISYACDQLKDSTNSSLAGSSLISAAEKFLLEETRRASDFEKILNSHIEEMKRNSESTVSRYQSHGQSRHI.

Coiled coils occupy residues 8–68, 130–180, and 227–284; these read IARN…NHEI, CELQ…FQKE, and IENL…DLLR. Positions 297-306 are enriched in polar residues; it reads TANLANQKTA. Residues 297–316 form a disordered region; the sequence is TANLANQKTAQGEEASFQVT. Residues 337–402 adopt a coiled-coil conformation; that stretch reads SEKYQAENDL…LKGAQNRQTS (66 aa). The tract at residues 447–467 is disordered; that stretch reads DKPQKHRSFHGENNSLKPTNY. Residues 457-467 show a composition bias toward polar residues; that stretch reads GENNSLKPTNY.

This sequence belongs to the CEP63 family.

The protein resides in the cytoplasm. Its function is as follows. Key structural component of the deuterosome, a structure that promotes de novo centriole amplification in multiciliated cells. Deuterosome-mediated centriole amplification occurs in terminally differentiated multiciliated cells and can generate more than 100 centrioles. Probably sufficient for the specification and formation of the deuterosome inner core. This Xenopus tropicalis (Western clawed frog) protein is Deuterosome assembly protein 1.